The following is a 157-amino-acid chain: S-ribosylhomocysteine lyase (157 aa).

Histidine 54, histidine 58, and cysteine 124 together coordinate Fe cation.

It belongs to the LuxS family. As to quaternary structure, homodimer. It depends on Fe cation as a cofactor.

It carries out the reaction S-(5-deoxy-D-ribos-5-yl)-L-homocysteine = (S)-4,5-dihydroxypentane-2,3-dione + L-homocysteine. Functionally, involved in the synthesis of autoinducer 2 (AI-2) which is secreted by bacteria and is used to communicate both the cell density and the metabolic potential of the environment. The regulation of gene expression in response to changes in cell density is called quorum sensing. Catalyzes the transformation of S-ribosylhomocysteine (RHC) to homocysteine (HC) and 4,5-dihydroxy-2,3-pentadione (DPD). The chain is S-ribosylhomocysteine lyase from Levilactobacillus brevis (strain ATCC 367 / BCRC 12310 / CIP 105137 / JCM 1170 / LMG 11437 / NCIMB 947 / NCTC 947) (Lactobacillus brevis).